The following is a 285-amino-acid chain: Phosphatidylglycerol--prolipoprotein diacylglyceryl transferase (285 aa).

4 helical membrane passes run 30–50, 67–87, 103–123, and 129–149; these read LEIRWYALSYVFGILFAHWHI, LMLWAVIGIILGGRTAYILLY, WHGGMSMHGGYVGCIIAVSIV, and VRVMPVLDLCACAAPLGLFLG. Position 150 (R150) interacts with a 1,2-diacyl-sn-glycero-3-phospho-(1'-sn-glycerol). The next 3 helical transmembrane spans lie at 184-204, 213-233, and 252-272; these read SQVYEAMLEGLLPLLFMSILA, FGVLSHMFGAWYGIVRCAVEF, and GQVLSAPIAVVGIFMLVLTVL.

The protein belongs to the Lgt family.

It is found in the cell inner membrane. The enzyme catalyses L-cysteinyl-[prolipoprotein] + a 1,2-diacyl-sn-glycero-3-phospho-(1'-sn-glycerol) = an S-1,2-diacyl-sn-glyceryl-L-cysteinyl-[prolipoprotein] + sn-glycerol 1-phosphate + H(+). It functions in the pathway protein modification; lipoprotein biosynthesis (diacylglyceryl transfer). Catalyzes the transfer of the diacylglyceryl group from phosphatidylglycerol to the sulfhydryl group of the N-terminal cysteine of a prolipoprotein, the first step in the formation of mature lipoproteins. The polypeptide is Phosphatidylglycerol--prolipoprotein diacylglyceryl transferase (Anaplasma marginale (strain Florida)).